We begin with the raw amino-acid sequence, 224 residues long: PKHD-type hydroxylase KPN78578_12210 (224 aa).

The region spanning 77–176 (TISAPLFNRY…RQASFLWIQS (100 aa)) is the Fe2OG dioxygenase domain. Fe cation contacts are provided by His95, Asp97, and His157. Arg167 is a binding site for 2-oxoglutarate.

Fe(2+) serves as cofactor. The cofactor is L-ascorbate.

This Klebsiella pneumoniae subsp. pneumoniae (strain ATCC 700721 / MGH 78578) protein is PKHD-type hydroxylase KPN78578_12210.